A 93-amino-acid polypeptide reads, in one-letter code: MGIMDLFKKKSSGNVAKDRLKLVLVSDRANCSSEMMEMMKRDIIEVISRYMDIDAEALDVKITETESDSNNGMVPALVANIPIRDMKHRPDPR.

It belongs to the MinE family.

Prevents the cell division inhibition by proteins MinC and MinD at internal division sites while permitting inhibition at polar sites. This ensures cell division at the proper site by restricting the formation of a division septum at the midpoint of the long axis of the cell. This is Cell division topological specificity factor from Agathobacter rectalis (strain ATCC 33656 / DSM 3377 / JCM 17463 / KCTC 5835 / VPI 0990) (Eubacterium rectale).